The primary structure comprises 736 residues: Catalase-peroxidase (736 aa).

The interval 1-25 is disordered; sequence MSENGKCPVTGKTSKPVAGGGTSNQ. A cross-link (tryptophyl-tyrosyl-methioninium (Trp-Tyr) (with M-250)) is located at residues 96–224; sequence WHSAGTYRMG…LAAVQMGLIY (129 aa). Catalysis depends on His-97, which acts as the Proton acceptor. A cross-link (tryptophyl-tyrosyl-methioninium (Tyr-Met) (with W-96)) is located at residues 224–250; the sequence is YVNPEGPDGNPDPIASGKDVRETFARM. His-265 contacts heme b. Residues 294–313 form a disordered region; sequence GWKSSHGRGKGGDTISSGIE.

This sequence belongs to the peroxidase family. Peroxidase/catalase subfamily. As to quaternary structure, homodimer or homotetramer. Heme b is required as a cofactor. Post-translationally, formation of the three residue Trp-Tyr-Met cross-link is important for the catalase, but not the peroxidase activity of the enzyme.

It carries out the reaction H2O2 + AH2 = A + 2 H2O. The enzyme catalyses 2 H2O2 = O2 + 2 H2O. Functionally, bifunctional enzyme with both catalase and broad-spectrum peroxidase activity. The sequence is that of Catalase-peroxidase from Desulfatibacillum aliphaticivorans.